The sequence spans 725 residues: NAD(+) hydrolase SARM1 (725 aa).

The transit peptide at 1–27 (MVLTILFSAYKLCRFFAMSSPRPGAER) directs the protein to the mitochondrion. An ARM 1 repeat occupies 60-100 (EVQGALERALPELQQALSALKQAGGGRAVGAGLAEVFQLVE). NAD(+) contacts are provided by residues tryptophan 103, arginine 110, 149–158 (EQILVAENRR), and 191–194 (HMFK). ARM repeat units follow at residues 114-153 (QGLC…QILV), 155-194 (ENRR…HMFK), 197-236 (EETC…NCAM), 238-281 (GGQA…LATN), 282-315 (KEVE…CLVD), 316-355 (ASDT…AEAV), and 360-403 (KNRN…EEVP). 2 consecutive SAM domains span residues 413–477 (WKEA…LKTF) and 483–549 (CDRS…MLHS). 2 positions are modified to phosphoserine: serine 549 and serine 559. Positions 561–704 (DVPDVFISYR…KIIRFLQGRS (144 aa)) constitute a TIR domain. NAD(+) is bound by residues 570–571 (RR) and glutamate 600. Glutamate 643 is a catalytic residue. Positions 705-725 (SRDSSAGSDTSLEGAAPMGPT) are disordered.

This sequence belongs to the SARM1 family. As to quaternary structure, homooctamer; forms an octameric ring via SAM domains. Interacts with TICAM1/TRIF and thereby interferes with TICAM1/TRIF function. Interacts with MAPK10/JNK3 and SDC2 (via cytoplasmic domain). Phosphorylation at Ser-549 by JNK kinases (MAPK8, MAPK9 and /or MAPK10) enhance the NAD(+) hydrolase (NADase) activity. Phosphorylation at Ser-549 and subsequent activation takes place in response to oxidative stress conditions and inhibits mitochondrial respiration. Highest expression seen in the spleen and the brain, followed by lung, kidney, liver and other tissues.

It is found in the cytoplasm. It localises to the cell projection. The protein resides in the axon. Its subcellular location is the dendrite. The protein localises to the synapse. It is found in the mitochondrion. It catalyses the reaction NAD(+) + H2O = ADP-D-ribose + nicotinamide + H(+). The catalysed reaction is NAD(+) = cyclic ADP-beta-D-ribose + nicotinamide + H(+). It carries out the reaction NADP(+) + H2O = ADP-D-ribose 2'-phosphate + nicotinamide + H(+). Autoinhibited: in the inactive state, the enzymatic TIR domain is held apart by the autoinhibiting ARM repeats. NAD(+)-binding to ARM repeats maintains an inactive state by promoting interaction between ARM repeats and the TIR domain, thereby facilitating inhibition of the enzymatic TIR domain. Following activation, possibly by nicotinamide mononucleotide (NMN), auto-inhibitory interactions are released, allowing self-association of the TIR domains and subsequent activation of the NAD(+) hydrolase (NADase) activity. Self-association of TIR domains is facilitated by the octamer of SAM domains. Its function is as follows. NAD(+) hydrolase, which plays a key role in axonal degeneration following injury by regulating NAD(+) metabolism. Acts as a negative regulator of MYD88- and TRIF-dependent toll-like receptor signaling pathway by promoting Wallerian degeneration, an injury-induced form of programmed subcellular death which involves degeneration of an axon distal to the injury site. Wallerian degeneration is triggered by NAD(+) depletion: in response to injury, SARM1 is activated and catalyzes cleavage of NAD(+) into ADP-D-ribose (ADPR), cyclic ADPR (cADPR) and nicotinamide; NAD(+) cleavage promoting cytoskeletal degradation and axon destruction. Also able to hydrolyze NADP(+), but not other NAD(+)-related molecules. Can activate neuronal cell death in response to stress. Regulates dendritic arborization through the MAPK4-JNK pathway. Involved in innate immune response: inhibits both TICAM1/TRIF- and MYD88-dependent activation of JUN/AP-1, TRIF-dependent activation of NF-kappa-B and IRF3, and the phosphorylation of MAPK14/p38. The chain is NAD(+) hydrolase SARM1 from Sus scrofa (Pig).